The primary structure comprises 215 residues: Cytokinin riboside 5'-monophosphate phosphoribohydrolase LOG4 (215 aa).

Substrate is bound by residues E84, 102 to 103, 119 to 125, and T131; these read RK and GYGTLEE.

It belongs to the LOG family. Expressed in roots and shoots. Detected in root procambium, lateral root primordia, vascular tissues of cotyledons, leaves and stems, shoot apical meristem, axillary buds, young inflorescences, fruit abscission zones and basal part of ovules.

It localises to the cytoplasm. It is found in the nucleus. The catalysed reaction is N(6)-(dimethylallyl)adenosine 5'-phosphate + H2O = N(6)-dimethylallyladenine + D-ribose 5-phosphate. It catalyses the reaction 9-ribosyl-trans-zeatin 5'-phosphate + H2O = trans-zeatin + D-ribose 5-phosphate. Cytokinin-activating enzyme working in the direct activation pathway. Phosphoribohydrolase that converts inactive cytokinin nucleotides to the biologically active free-base forms. The polypeptide is Cytokinin riboside 5'-monophosphate phosphoribohydrolase LOG4 (LOG4) (Arabidopsis thaliana (Mouse-ear cress)).